Reading from the N-terminus, the 144-residue chain is Deoxyuridine 5'-triphosphate nucleotidohydrolase (144 aa).

S66, G79, D82, Y85, K90, R134, F139, and G140 together coordinate dUMP.

The protein belongs to the dUTPase family. In terms of assembly, homotrimer. Mg(2+) serves as cofactor.

It carries out the reaction dUTP + H2O = dUMP + diphosphate + H(+). It participates in pyrimidine metabolism; dUMP biosynthesis; dUMP from dCTP (dUTP route): step 2/2. Involved in nucleotide metabolism via production of dUMP, the immediate precursor of thymidine nucleotides, and decreases the intracellular concentration of dUTP so that uracil cannot be incorporated into DNA. This Candida glabrata (strain ATCC 2001 / BCRC 20586 / JCM 3761 / NBRC 0622 / NRRL Y-65 / CBS 138) (Yeast) protein is Deoxyuridine 5'-triphosphate nucleotidohydrolase (DUT1).